The sequence spans 641 residues: PWWP domain-containing DNA repair factor 3A (641 aa).

The interval 98–329 (LNERQGSSSR…LEEDEDDEEP (232 aa)) is disordered. Serine 156 is modified (phosphoserine). Basic and acidic residues-rich tracts occupy residues 194 to 203 (QDREASRKQQ) and 295 to 307 (ADTRPLEEARPLS). Phosphoserine is present on serine 307. The PWWP domain occupies 343–404 (VGMLVWHKYQ…KHFDCKEKQA (62 aa)). The disordered stretch occupies residues 463-486 (TRFPQLSGGDPEEPVAGSPQGRRP).

It belongs to the PWWP3A family. Interacts with TP53BP1 (via BRCT domain); the interaction is not dependent on its phosphorylation status. Binds nucleosomes. Interacts with trimethylated 'Lys-36' of histone H3 (H3K36me3) (in vitro).

The protein localises to the nucleus. Involved in the DNA damage response pathway by contributing to the maintenance of chromatin architecture. Recruited to the vicinity of DNA breaks by TP53BP1 and plays an accessory role to facilitate damage-induced chromatin changes and promoting chromatin relaxation. Required for efficient DNA repair and cell survival following DNA damage. In Bos taurus (Bovine), this protein is PWWP domain-containing DNA repair factor 3A (PWWP3A).